The chain runs to 516 residues: Cytochrome P450 1A1 (516 aa).

Residues 33–44 (WQPRVPKGLKSP) are mitochondrial targeting signal. Serine 71 carries an O-linked (GlcNAc) serine glycan. Phenylalanine 228 lines the substrate pocket. Cysteine 461 contributes to the heme binding site.

It belongs to the cytochrome P450 family. Interacts with cytosolic chaperones HSP70 and HSP90; this interaction is required for initial targeting to mitochondria. Interacts (via mitochondrial targeting signal) with TOMM40 (via N-terminus); this interaction is required for translocation across the mitochondrial outer membrane. The cofactor is heme.

It localises to the endoplasmic reticulum membrane. Its subcellular location is the mitochondrion inner membrane. It is found in the microsome membrane. The protein resides in the cytoplasm. It catalyses the reaction an organic molecule + reduced [NADPH--hemoprotein reductase] + O2 = an alcohol + oxidized [NADPH--hemoprotein reductase] + H2O + H(+). The catalysed reaction is estrone + reduced [NADPH--hemoprotein reductase] + O2 = 2-hydroxyestrone + oxidized [NADPH--hemoprotein reductase] + H2O + H(+). The enzyme catalyses estrone + reduced [NADPH--hemoprotein reductase] + O2 = 4-hydroxyestrone + oxidized [NADPH--hemoprotein reductase] + H2O + H(+). It carries out the reaction estrone + reduced [NADPH--hemoprotein reductase] + O2 = 6alpha-hydroxyestrone + oxidized [NADPH--hemoprotein reductase] + H2O + H(+). It catalyses the reaction estrone + reduced [NADPH--hemoprotein reductase] + O2 = 15alpha-hydroxyestrone + oxidized [NADPH--hemoprotein reductase] + H2O + H(+). The catalysed reaction is estrone + reduced [NADPH--hemoprotein reductase] + O2 = 16alpha-hydroxyestrone + oxidized [NADPH--hemoprotein reductase] + H2O + H(+). The enzyme catalyses 17beta-estradiol + reduced [NADPH--hemoprotein reductase] + O2 = 2-hydroxy-17beta-estradiol + oxidized [NADPH--hemoprotein reductase] + H2O + H(+). It carries out the reaction 17beta-estradiol + reduced [NADPH--hemoprotein reductase] + O2 = 4-hydroxy-17beta-estradiol + oxidized [NADPH--hemoprotein reductase] + H2O + H(+). It catalyses the reaction 17beta-estradiol + reduced [NADPH--hemoprotein reductase] + O2 = 6alpha-hydroxy-17beta-estradiol + oxidized [NADPH--hemoprotein reductase] + H2O + H(+). The catalysed reaction is 17beta-estradiol + reduced [NADPH--hemoprotein reductase] + O2 = 7alpha-hydroxy-17beta-estradiol + oxidized [NADPH--hemoprotein reductase] + H2O + H(+). The enzyme catalyses 17beta-estradiol + reduced [NADPH--hemoprotein reductase] + O2 = 15alpha-hydroxy-17beta-estradiol + oxidized [NADPH--hemoprotein reductase] + H2O + H(+). It carries out the reaction (5Z,8Z,11Z)-eicosatrienoate + reduced [NADPH--hemoprotein reductase] + O2 = 19-hydroxy-(5Z,8Z,11Z)-eicosatrienoate + oxidized [NADPH--hemoprotein reductase] + H2O + H(+). It catalyses the reaction (5Z,8Z,11Z,14Z)-eicosatetraenoate + reduced [NADPH--hemoprotein reductase] + O2 = 16-hydroxy-(5Z,8Z,11Z,14Z)-eicosatetraenoate + oxidized [NADPH--hemoprotein reductase] + H2O + H(+). The catalysed reaction is (5Z,8Z,11Z,14Z)-eicosatetraenoate + reduced [NADPH--hemoprotein reductase] + O2 = 17-hydroxy-(5Z,8Z,11Z,14Z)-eicosatetraenoate + oxidized [NADPH--hemoprotein reductase] + H2O + H(+). The enzyme catalyses (5Z,8Z,11Z,14Z)-eicosatetraenoate + reduced [NADPH--hemoprotein reductase] + O2 = 18-hydroxy-(5Z,8Z,11Z,14Z)-eicosatetraenoate + oxidized [NADPH--hemoprotein reductase] + H2O + H(+). It carries out the reaction (5Z,8Z,11Z,14Z)-eicosatetraenoate + reduced [NADPH--hemoprotein reductase] + O2 = 19-hydroxy-(5Z,8Z,11Z,14Z)-eicosatetraenoate + oxidized [NADPH--hemoprotein reductase] + H2O + H(+). It catalyses the reaction (5Z,8Z,11Z,14Z,17Z)-eicosapentaenoate + reduced [NADPH--hemoprotein reductase] + O2 = 19-hydroxy-(5Z,8Z,11Z,14Z,17Z)-eicosapentaenoate + oxidized [NADPH--hemoprotein reductase] + H2O + H(+). The catalysed reaction is (5Z,8Z,11Z,14Z)-eicosatetraenoate + reduced [NADPH--hemoprotein reductase] + O2 = (8R,9S)-epoxy-(5Z,11Z,14Z)-eicosatrienoate + oxidized [NADPH--hemoprotein reductase] + H2O + H(+). The enzyme catalyses (5Z,8Z,11Z,14Z)-eicosatetraenoate + reduced [NADPH--hemoprotein reductase] + O2 = (11R,12S)-epoxy-(5Z,8Z,14Z)-eicosatrienoate + oxidized [NADPH--hemoprotein reductase] + H2O + H(+). It carries out the reaction (5Z,8Z,11Z,14Z)-eicosatetraenoate + reduced [NADPH--hemoprotein reductase] + O2 = (14S,15R)-epoxy-(5Z,8Z,11Z)-eicosatrienoate + oxidized [NADPH--hemoprotein reductase] + H2O + H(+). It catalyses the reaction (5Z,8Z,11Z,14Z)-eicosatetraenoate + reduced [NADPH--hemoprotein reductase] + O2 = (14R,15S)-epoxy-(5Z,8Z,11Z)-eicosatrienoate + oxidized [NADPH--hemoprotein reductase] + H2O + H(+). The catalysed reaction is (5Z,8Z,11Z,14Z,17Z)-eicosapentaenoate + reduced [NADPH--hemoprotein reductase] + O2 = (17R,18S)-epoxy-(5Z,8Z,11Z,14Z)-eicosatetraenoate + oxidized [NADPH--hemoprotein reductase] + H2O + H(+). The enzyme catalyses (4Z,7Z,10Z,13Z,16Z,19Z)-docosahexaenoate + reduced [NADPH--hemoprotein reductase] + O2 = (19S,20R)-epoxy-(4Z,7Z,10Z,13Z,16Z)-docosapentaenoate + oxidized [NADPH--hemoprotein reductase] + H2O + H(+). It carries out the reaction (4Z,7Z,10Z,13Z,16Z,19Z)-docosahexaenoate + reduced [NADPH--hemoprotein reductase] + O2 = (19R,20S)-epoxy-(4Z,7Z,10Z,13Z,16Z)-docosapentaenoate + oxidized [NADPH--hemoprotein reductase] + H2O + H(+). It catalyses the reaction all-trans-retinol + reduced [NADPH--hemoprotein reductase] + O2 = all-trans-retinal + oxidized [NADPH--hemoprotein reductase] + 2 H2O + H(+). The catalysed reaction is all-trans-retinal + reduced [NADPH--hemoprotein reductase] + O2 = all-trans-retinoate + oxidized [NADPH--hemoprotein reductase] + H2O + 2 H(+). The enzyme catalyses (13S)-hydroperoxy-(9Z,11E)-octadecadienoate = 13-oxo-(9Z,11E)-octadecadienoate + H2O. It carries out the reaction (12S)-hydroperoxy-(5Z,8Z,10E,14Z)-eicosatetraenoate = 12-oxo-(5Z,8Z,10E,14Z)-eicosatetraenoate + H2O. It catalyses the reaction (15S)-hydroperoxy-(5Z,8Z,11Z,13E)-eicosatetraenoate = 15-oxo-(5Z,8Z,11Z,13E)-eicosatetraenoate + H2O. The catalysed reaction is (5S)-hydroperoxy-(6E,8Z,11Z,14Z)-eicosatetraenoate = 5-oxo-(6E,8Z,11Z,14Z)-eicosatetraenoate + H2O. Its pathway is steroid hormone biosynthesis. The protein operates within lipid metabolism; fatty acid metabolism. It functions in the pathway cofactor metabolism; retinol metabolism. Functionally, a cytochrome P450 monooxygenase involved in the metabolism of various endogenous substrates, including fatty acids, steroid hormones and vitamins. Mechanistically, uses molecular oxygen inserting one oxygen atom into a substrate, and reducing the second into a water molecule, with two electrons provided by NADPH via cytochrome P450 reductase (CPR; NADPH-ferrihemoprotein reductase). Catalyzes the hydroxylation of carbon-hydrogen bonds. Exhibits high catalytic activity for the formation of hydroxyestrogens from estrone (E1) and 17beta-estradiol (E2), namely 2-hydroxy E1 and E2, as well as D-ring hydroxylated E1 and E2 at the C15alpha and C16alpha positions. Displays different regioselectivities for polyunsaturated fatty acids (PUFA) hydroxylation. Catalyzes the epoxidation of double bonds of certain PUFA. Converts arachidonic acid toward epoxyeicosatrienoic acid (EET) regioisomers, 8,9-, 11,12-, and 14,15-EET, that function as lipid mediators in the vascular system. Displays an absolute stereoselectivity in the epoxidation of eicosapentaenoic acid (EPA) producing the 17(R),18(S) enantiomer. May play an important role in all-trans retinoic acid biosynthesis in extrahepatic tissues. Catalyzes two successive oxidative transformation of all-trans retinol to all-trans retinal and then to the active form all-trans retinoic acid. May also participate in eicosanoids metabolism by converting hydroperoxide species into oxo metabolites (lipoxygenase-like reaction, NADPH-independent). The polypeptide is Cytochrome P450 1A1 (CYP1A1) (Balaenoptera acutorostrata (Common minke whale)).